We begin with the raw amino-acid sequence, 641 residues long: Ribosomal oxygenase 1 (641 aa).

N-acetylmethionine is present on M1. Disordered regions lie at residues 1–35 (MDGL…LPLR) and 54–80 (RTQT…DALP). The segment covering 12–23 (RRGRPKRRRKPQ) has biased composition (basic residues). Phosphoserine occurs at positions 60, 63, and 109. In terms of domain architecture, JmjC spans 294–439 (CSLRLLCPQA…DFLEAILPLA (146 aa)). Fe cation contacts are provided by H340, D342, and H405.

It belongs to the ROX family. NO66 subfamily. As to quaternary structure, interacts with SP7/OSX; the interaction is direct. Interacts with MYC. Interacts with PHF19; leading to its recruitment to H3K36me3 sites. It depends on Fe(2+) as a cofactor. Widely expressed. Overexpressed in lung carcinomas.

Its subcellular location is the nucleus. The protein resides in the nucleolus. It localises to the nucleoplasm. The enzyme catalyses N(6),N(6)-dimethyl-L-lysyl(36)-[histone H3] + 2 2-oxoglutarate + 2 O2 = L-lysyl(36)-[histone H3] + 2 formaldehyde + 2 succinate + 2 CO2. It carries out the reaction N(6)-methyl-L-lysyl-[protein] + 2-oxoglutarate + O2 = L-lysyl-[protein] + formaldehyde + succinate + CO2. The catalysed reaction is L-histidyl-[protein] + 2-oxoglutarate + O2 = (3S)-3-hydroxy-L-histidyl-[protein] + succinate + CO2. In terms of biological role, oxygenase that can act as both a histone lysine demethylase and a ribosomal histidine hydroxylase. Specifically demethylates 'Lys-4' (H3K4me) and 'Lys-36' (H3K36me) of histone H3, thereby playing a central role in histone code. Preferentially demethylates trimethylated H3 'Lys-4' (H3K4me3) and monomethylated H3 'Lys-4' (H3K4me1) residues, while it has weaker activity for dimethylated H3 'Lys-36' (H3K36me2). Acts as a regulator of osteoblast differentiation via its interaction with SP7/OSX by demethylating H3K4me and H3K36me, thereby inhibiting SP7/OSX-mediated promoter activation. Also catalyzes demethylation of non-histone proteins, such as CGAS: demethylation of monomethylated CGAS promotes interaction between CGAS and PARP1, followed by PARP1 inactivation. Also catalyzes the hydroxylation of 60S ribosomal protein L8 on 'His-216', thereby playing a role in ribosome biogenesis. Participates in MYC-induced transcriptional activation. The polypeptide is Ribosomal oxygenase 1 (Homo sapiens (Human)).